The following is a 968-amino-acid chain: Isoleucine--tRNA ligase (968 aa).

The short motif at 68 to 78 is the 'HIGH' region element; sequence PYANGALHMGH. Position 582 (Glu582) interacts with L-isoleucyl-5'-AMP. Residues 623–627 carry the 'KMSKS' region motif; sequence KMSKS. ATP is bound at residue Lys626. Positions 936, 939, 956, and 959 each coordinate Zn(2+).

It belongs to the class-I aminoacyl-tRNA synthetase family. IleS type 1 subfamily. As to quaternary structure, monomer. Requires Zn(2+) as cofactor.

The protein resides in the cytoplasm. It carries out the reaction tRNA(Ile) + L-isoleucine + ATP = L-isoleucyl-tRNA(Ile) + AMP + diphosphate. Its function is as follows. Catalyzes the attachment of isoleucine to tRNA(Ile). As IleRS can inadvertently accommodate and process structurally similar amino acids such as valine, to avoid such errors it has two additional distinct tRNA(Ile)-dependent editing activities. One activity is designated as 'pretransfer' editing and involves the hydrolysis of activated Val-AMP. The other activity is designated 'posttransfer' editing and involves deacylation of mischarged Val-tRNA(Ile). This chain is Isoleucine--tRNA ligase, found in Prochlorococcus marinus (strain MIT 9301).